The primary structure comprises 244 residues: UDP-2,3-diacylglucosamine hydrolase (244 aa).

Residues D8, H10, D41, N79, and H114 each coordinate Mn(2+). 79–80 (NR) contacts substrate. Substrate is bound by residues D122, K164, K167, and H195. H195 and H197 together coordinate Mn(2+).

This sequence belongs to the LpxH family. Requires Mn(2+) as cofactor.

The protein localises to the cell inner membrane. It carries out the reaction UDP-2-N,3-O-bis[(3R)-3-hydroxytetradecanoyl]-alpha-D-glucosamine + H2O = 2-N,3-O-bis[(3R)-3-hydroxytetradecanoyl]-alpha-D-glucosaminyl 1-phosphate + UMP + 2 H(+). It functions in the pathway glycolipid biosynthesis; lipid IV(A) biosynthesis; lipid IV(A) from (3R)-3-hydroxytetradecanoyl-[acyl-carrier-protein] and UDP-N-acetyl-alpha-D-glucosamine: step 4/6. In terms of biological role, hydrolyzes the pyrophosphate bond of UDP-2,3-diacylglucosamine to yield 2,3-diacylglucosamine 1-phosphate (lipid X) and UMP by catalyzing the attack of water at the alpha-P atom. Involved in the biosynthesis of lipid A, a phosphorylated glycolipid that anchors the lipopolysaccharide to the outer membrane of the cell. This chain is UDP-2,3-diacylglucosamine hydrolase, found in Vibrio atlanticus (strain LGP32) (Vibrio splendidus (strain Mel32)).